Consider the following 92-residue polypeptide: Auxin-responsive protein SAUR28 (92 aa).

Belongs to the ARG7 family. Higher expression in thermo-responsive cultivars (e.g. cv. Alst-1, cv. Ang-0 and cv. Com-0) than in low thermo-responsive cultivars (e.g. cv. Dja-1, cv. El-0 and cv. Kon).

It localises to the cell membrane. Functionally, functions as a positive effector of cell expansion through modulation of auxin transport. Involved in thermo-responsiveness of plant architecture. Enhances plasma membrane H(+)-ATPase. The chain is Auxin-responsive protein SAUR28 from Arabidopsis thaliana (Mouse-ear cress).